The primary structure comprises 527 residues: Probable malate:quinone oxidoreductase (527 aa).

The protein belongs to the MQO family. Requires FAD as cofactor.

It carries out the reaction (S)-malate + a quinone = a quinol + oxaloacetate. It functions in the pathway carbohydrate metabolism; tricarboxylic acid cycle; oxaloacetate from (S)-malate (quinone route): step 1/1. The chain is Probable malate:quinone oxidoreductase from Pectobacterium atrosepticum (strain SCRI 1043 / ATCC BAA-672) (Erwinia carotovora subsp. atroseptica).